A 416-amino-acid chain; its full sequence is Serine hydroxymethyltransferase (416 aa).

(6S)-5,6,7,8-tetrahydrofolate-binding positions include Leu-121 and 125–127 (GHL). N6-(pyridoxal phosphate)lysine is present on Lys-229.

This sequence belongs to the SHMT family. Homodimer. Pyridoxal 5'-phosphate is required as a cofactor.

Its subcellular location is the cytoplasm. It carries out the reaction (6R)-5,10-methylene-5,6,7,8-tetrahydrofolate + glycine + H2O = (6S)-5,6,7,8-tetrahydrofolate + L-serine. Its pathway is one-carbon metabolism; tetrahydrofolate interconversion. It functions in the pathway amino-acid biosynthesis; glycine biosynthesis; glycine from L-serine: step 1/1. Catalyzes the reversible interconversion of serine and glycine with tetrahydrofolate (THF) serving as the one-carbon carrier. This reaction serves as the major source of one-carbon groups required for the biosynthesis of purines, thymidylate, methionine, and other important biomolecules. Also exhibits THF-independent aldolase activity toward beta-hydroxyamino acids, producing glycine and aldehydes, via a retro-aldol mechanism. The sequence is that of Serine hydroxymethyltransferase from Dechloromonas aromatica (strain RCB).